Reading from the N-terminus, the 71-residue chain is MSLMNSTNPEFIEYYHTSWKPHKIELVDNIYHSYGYYVYTRSVIKRFNKHLIKTTYKRIFSHPENIVLHFR.

This is an uncharacterized protein from Cassava vein mosaic virus (CsVMV).